Here is a 180-residue protein sequence, read N- to C-terminus: uncharacterized protein (180 aa).

The next 2 membrane-spanning stretches (helical) occupy residues 37–59 and 128–147; these read VLHA…FPSF and AGSA…VLFV.

The protein resides in the cell membrane. This is an uncharacterized protein from Treponema pallidum (strain Nichols).